The following is a 128-amino-acid chain: Large ribosomal subunit protein bL17 (128 aa).

The protein belongs to the bacterial ribosomal protein bL17 family. In terms of assembly, part of the 50S ribosomal subunit. Contacts protein L32.

In Tolumonas auensis (strain DSM 9187 / NBRC 110442 / TA 4), this protein is Large ribosomal subunit protein bL17.